The sequence spans 249 residues: 2,3-bisphosphoglycerate-dependent phosphoglycerate mutase (249 aa).

Residues 10–17 (RHGESEWN), 23–24 (TG), arginine 62, 89–92 (ERHY), lysine 100, 116–117 (RR), and 185–186 (GN) contribute to the substrate site. Histidine 11 (tele-phosphohistidine intermediate) is an active-site residue. Glutamate 89 acts as the Proton donor/acceptor in catalysis.

The protein belongs to the phosphoglycerate mutase family. BPG-dependent PGAM subfamily. As to quaternary structure, homodimer.

It catalyses the reaction (2R)-2-phosphoglycerate = (2R)-3-phosphoglycerate. It functions in the pathway carbohydrate degradation; glycolysis; pyruvate from D-glyceraldehyde 3-phosphate: step 3/5. Catalyzes the interconversion of 2-phosphoglycerate and 3-phosphoglycerate. The protein is 2,3-bisphosphoglycerate-dependent phosphoglycerate mutase of Hamiltonella defensa subsp. Acyrthosiphon pisum (strain 5AT).